Here is a 280-residue protein sequence, read N- to C-terminus: Phosphatidylglycerol--prolipoprotein diacylglyceryl transferase (280 aa).

A run of 2 helical transmembrane segments spans residues 59–79 (FLTW…ILFY) and 97–117 (GGMS…LFTW). Residue Arg-142 coordinates a 1,2-diacyl-sn-glycero-3-phospho-(1'-sn-glycerol). The next 2 membrane-spanning stretches (helical) occupy residues 207–227 (GFLA…CECF) and 233–253 (FIGF…PMAI).

Belongs to the Lgt family.

Its subcellular location is the cell inner membrane. It catalyses the reaction L-cysteinyl-[prolipoprotein] + a 1,2-diacyl-sn-glycero-3-phospho-(1'-sn-glycerol) = an S-1,2-diacyl-sn-glyceryl-L-cysteinyl-[prolipoprotein] + sn-glycerol 1-phosphate + H(+). Its pathway is protein modification; lipoprotein biosynthesis (diacylglyceryl transfer). Functionally, catalyzes the transfer of the diacylglyceryl group from phosphatidylglycerol to the sulfhydryl group of the N-terminal cysteine of a prolipoprotein, the first step in the formation of mature lipoproteins. The protein is Phosphatidylglycerol--prolipoprotein diacylglyceryl transferase of Gluconacetobacter diazotrophicus (strain ATCC 49037 / DSM 5601 / CCUG 37298 / CIP 103539 / LMG 7603 / PAl5).